Here is a 336-residue protein sequence, read N- to C-terminus: L-Ala-D/L-amino acid epimerase (336 aa).

Substrate contacts are provided by residues threonine 130 and 152-154; that span reads KIK. Mg(2+) contacts are provided by aspartate 178, glutamate 204, and aspartate 229. Substrate contacts are provided by residues lysine 251 and 301–303; that span reads DMD.

It belongs to the mandelate racemase/muconate lactonizing enzyme family. Mg(2+) is required as a cofactor.

Functionally, catalyzes the epimerization of D-Ala-D-Ala to D-Ala-L-Ala. Has broad substrate specificity and catalyzes the epimerization of a variety of dipeptides containing an N-terminal Ala followed by Ser, Thr, Val, Met, His, Phe or Trp (in vitro). This chain is L-Ala-D/L-amino acid epimerase, found in Flavobacterium johnsoniae (strain ATCC 17061 / DSM 2064 / JCM 8514 / BCRC 14874 / CCUG 350202 / NBRC 14942 / NCIMB 11054 / UW101) (Cytophaga johnsonae).